A 126-amino-acid polypeptide reads, in one-letter code: Small ribosomal subunit protein uS13 (126 aa).

Positions 92–126 are disordered; the sequence is HRRGLPVRGQRTKTNARTRKGPKKTVAGKKKATRK.

Belongs to the universal ribosomal protein uS13 family. In terms of assembly, part of the 30S ribosomal subunit. Forms a loose heterodimer with protein S19. Forms two bridges to the 50S subunit in the 70S ribosome.

Functionally, located at the top of the head of the 30S subunit, it contacts several helices of the 16S rRNA. In the 70S ribosome it contacts the 23S rRNA (bridge B1a) and protein L5 of the 50S subunit (bridge B1b), connecting the 2 subunits; these bridges are implicated in subunit movement. Contacts the tRNAs in the A and P-sites. In Deinococcus radiodurans (strain ATCC 13939 / DSM 20539 / JCM 16871 / CCUG 27074 / LMG 4051 / NBRC 15346 / NCIMB 9279 / VKM B-1422 / R1), this protein is Small ribosomal subunit protein uS13.